The primary structure comprises 38 residues: Photosystem II reaction center protein L (38 aa).

Residues 17 to 37 (SLYWGLLLIFVLAVLFSSYIF) form a helical membrane-spanning segment.

The protein belongs to the PsbL family. In terms of assembly, PSII is composed of 1 copy each of membrane proteins PsbA, PsbB, PsbC, PsbD, PsbE, PsbF, PsbH, PsbI, PsbJ, PsbK, PsbL, PsbM, PsbT, PsbY, PsbZ, Psb30/Ycf12, at least 3 peripheral proteins of the oxygen-evolving complex and a large number of cofactors. It forms dimeric complexes.

Its subcellular location is the plastid. The protein resides in the chloroplast thylakoid membrane. In terms of biological role, one of the components of the core complex of photosystem II (PSII). PSII is a light-driven water:plastoquinone oxidoreductase that uses light energy to abstract electrons from H(2)O, generating O(2) and a proton gradient subsequently used for ATP formation. It consists of a core antenna complex that captures photons, and an electron transfer chain that converts photonic excitation into a charge separation. This subunit is found at the monomer-monomer interface and is required for correct PSII assembly and/or dimerization. This is Photosystem II reaction center protein L from Euglena gracilis.